A 403-amino-acid polypeptide reads, in one-letter code: Argininosuccinate synthase (403 aa).

ATP is bound at residue 10–18; it reads AYSGGLDTS. Tyr-87 contributes to the L-citrulline binding site. Gly-117 lines the ATP pocket. L-aspartate contacts are provided by Thr-119, Asn-123, and Asp-124. Asn-123 contributes to the L-citrulline binding site. L-citrulline contacts are provided by Arg-127, Ser-175, Ser-184, Glu-260, and Tyr-272.

The protein belongs to the argininosuccinate synthase family. Type 1 subfamily. Homotetramer.

It is found in the cytoplasm. The catalysed reaction is L-citrulline + L-aspartate + ATP = 2-(N(omega)-L-arginino)succinate + AMP + diphosphate + H(+). The protein operates within amino-acid biosynthesis; L-arginine biosynthesis; L-arginine from L-ornithine and carbamoyl phosphate: step 2/3. This chain is Argininosuccinate synthase, found in Bacillus pumilus (strain SAFR-032).